We begin with the raw amino-acid sequence, 178 residues long: PRA1 family protein 2 (178 aa).

At 1 to 41 the chain is on the cytoplasmic side; that stretch reads MSEVRLPPLRALDDFVLGSARLAAPDPCDPQRWCHRVINNL. Residues 42–62 form a helical membrane-spanning segment; it reads LYYQTNYLLCFGIGLALAGYV. At 63 to 64 the chain is on the extracellular side; it reads RP. Residues 65-85 form a helical membrane-spanning segment; the sequence is LHTLLSALVVAVALGMLVWAA. Over 86–96 the chain is Cytoplasmic; that stretch reads ETRAAVRRCRR. Residues 97–119 traverse the membrane as a helical segment; that stretch reads SHPAACLAAVLAVGLLVLWVVGG. Topologically, residues 120–122 are extracellular; the sequence is ACT. Residues 123–140 traverse the membrane as a helical segment; the sequence is FLLSIAGPVLLILVHASL. Residues 141–178 lie on the Cytoplasmic side of the membrane; the sequence is RLRNLKNKIENKIESIGLKRTPMGLLLEALGQEQEAGS.

The protein belongs to the PRA1 family. Interacts with CCR5 and GDE1.

The protein localises to the endosome membrane. May be involved in ER/Golgi transport and vesicular traffic. Plays a proapoptotic role in cerulenin-induced neuroblastoma apoptosis. The chain is PRA1 family protein 2 (PRAF2) from Macaca fascicularis (Crab-eating macaque).